The chain runs to 655 residues: Tumor necrosis factor receptor superfamily member 21 (655 aa).

The first 41 residues, 1–41 (MGTSASSITALASCSRIAGQVGATMVAGSLLLLGFLSTITA), serve as a signal peptide directing secretion. At 42–349 (QPEQKTLSLT…PHKHFDINEH (308 aa)) the chain is on the extracellular side. TNFR-Cys repeat units follow at residues 50–88 (LTGTYRHVDRTTGQVLTCDKCPAGTYVSEHCTNTSLRVC), 90–131 (SCPS…DREC), 133–167 (CPPGMYQSNGTCAPHTVCPVGWGVRKKGTENEDVR), and 170–211 (QCAR…DNVC). 9 cysteine pairs are disulfide-bonded: cysteine 67–cysteine 80, cysteine 70–cysteine 88, cysteine 91–cysteine 106, cysteine 109–cysteine 123, cysteine 113–cysteine 131, cysteine 133–cysteine 144, cysteine 150–cysteine 168, cysteine 171–cysteine 186, and cysteine 192–cysteine 211. Asparagine 82 is a glycosylation site (N-linked (GlcNAc...) asparagine). Disordered stretches follow at residues 214–306 (HLSS…GPHH) and 318–338 (EATGEKSSTAIKAPKRGHPRQ). The segment covering 216–225 (SSSSTTPSSP) has biased composition (low complexity). 2 stretches are compositionally biased toward polar residues: residues 241-262 (VPSSTYEPQGMNSTDSNSTASV) and 276-302 (PDNTSSTSGKESTNRTLPNPPQLTHQQ). N-linked (GlcNAc...) asparagine glycans are attached at residues asparagine 252, asparagine 278, and asparagine 289. A helical membrane pass occupies residues 350 to 370 (LPWMIVLFLLLVLVLIVVCSI). A lipid anchor (S-palmitoyl cysteine) is attached at cysteine 368. Over 371 to 655 (RKSSRTLKKG…SVYSHLPDLL (285 aa)) the chain is Cytoplasmic. The 84-residue stretch at 415 to 498 (GIDILKLVAA…DVVEKIRGLM (84 aa)) folds into the Death domain.

Associates with TRADD. Interacts with NGFR. Interacts with CASP8. Oxidized in response to reactive oxygen species (ROS), leading to endocytosis. Detected in brain (at protein level). Detected in corpus callosum oligodendrocytes. Detected in embryonic and adult brain.

The protein localises to the cell membrane. Its function is as follows. Promotes apoptosis, possibly via a pathway that involves the activation of NF-kappa-B. Can also promote apoptosis mediated by BAX and by the release of cytochrome c from the mitochondria into the cytoplasm. Trophic-factor deprivation triggers the cleavage of surface APP by beta-secretase to release sAPP-beta which is further cleaved to release an N-terminal fragment of APP (N-APP). Negatively regulates oligodendrocyte survival, maturation and myelination. Plays a role in signaling cascades triggered by stimulation of T-cell receptors, in the adaptive immune response and in the regulation of T-cell differentiation and proliferation. Negatively regulates T-cell responses and the release of cytokines such as IL4, IL5, IL10, IL13 and IFNG by Th2 cells. Negatively regulates the production of IgG, IgM and IgM in response to antigens. May inhibit the activation of JNK in response to T-cell stimulation. Also acts as a regulator of pyroptosis: recruits CASP8 in response to reactive oxygen species (ROS) and subsequent oxidation, leading to activation of GSDMC. The protein is Tumor necrosis factor receptor superfamily member 21 (Tnfrsf21) of Rattus norvegicus (Rat).